The chain runs to 755 residues: Oligopeptide transporter 1 (755 aa).

Transmembrane regions (helical) follow at residues 58-78 (TWTLGLFSCILLAFVNQFFGF), 82-102 (QLWVSSVAAQIVTLPLGKLMA), 134-154 (ITIFANTGAGGVYATSIITIV), 165-185 (AAAMLLTQTTQLLGYGWAGIF), 226-246 (FFIIVFCVSFAYYIIPGYLFP), 298-318 (FFAIANFFGGFFIFLYIVLPI), 370-390 (YLSVMFALLYGLSFGSLCATI), 434-454 (WWFIAVLVISFAFALYACEGF), 462-482 (WWGLILACAIALFFTLPIGVI), 546-566 (FIVQLVATVVASTVCFGTTWW), 614-634 (GIYPGMNWFFLIGLLAPVPFW), 664-684 (AKAVHYWSWAIVGVVFNYYIF), and 697-717 (ILSAALDAGTAIMGVLIFFAF).

The protein belongs to the oligopeptide OPT transporter (TC 2.A.67.1) family. In terms of tissue distribution, highly expressed in flowers, and moderately expressed in leaves and stems.

The protein localises to the membrane. Involved in the translocation of tetra- and pentapeptides across the cellular membrane in an energy-dependent manner. This is Oligopeptide transporter 1 (OPT1) from Arabidopsis thaliana (Mouse-ear cress).